Here is a 302-residue protein sequence, read N- to C-terminus: Glycine--tRNA ligase alpha subunit (302 aa).

The protein belongs to the class-II aminoacyl-tRNA synthetase family. Tetramer of two alpha and two beta subunits.

It is found in the cytoplasm. It catalyses the reaction tRNA(Gly) + glycine + ATP = glycyl-tRNA(Gly) + AMP + diphosphate. The chain is Glycine--tRNA ligase alpha subunit from Wigglesworthia glossinidia brevipalpis.